A 521-amino-acid polypeptide reads, in one-letter code: Two-component response regulator ARR11 (521 aa).

A Response regulatory domain is found at 12-127 (RVLVVDDDPT…ELKIIWQHVL (116 aa)). Aspartate 63 carries the post-translational modification 4-aspartylphosphate. The Nuclear localization signal motif lies at 192 to 195 (KKAR). A DNA-binding region (myb-like GARP) is located at residues 195–246 (RVVWSFELHHKFVNAVNQIGCDHKAGPKKILDLMNVPWLTRENVASHLQKYR).

Belongs to the ARR family. Type-B subfamily. In terms of assembly, binds the target DNA as a monomer. Two-component system major event consists of a His-to-Asp phosphorelay between a sensor histidine kinase (HK) and a response regulator (RR). In plants, the His-to-Asp phosphorelay involves an additional intermediate named Histidine-containing phosphotransfer protein (HPt). This multistep phosphorelay consists of a His-Asp-His-Asp sequential transfer of a phosphate group between first a His and an Asp of the HK protein, followed by the transfer to a conserved His of the HPt protein and finally the transfer to an Asp in the receiver domain of the RR protein. In terms of tissue distribution, detected in the whole plant. Predominantly expressed in roots and stems.

The protein localises to the nucleus. Transcriptional activator that binds specifically to the DNA sequence 5'-[AG]GATT-3'. Functions as a response regulator involved in His-to-Asp phosphorelay signal transduction system. Phosphorylation of the Asp residue in the receiver domain activates the ability of the protein to promote the transcription of target genes. Could directly activate some type-A response regulators in response to cytokinins. The sequence is that of Two-component response regulator ARR11 (ARR11) from Arabidopsis thaliana (Mouse-ear cress).